Here is a 529-residue protein sequence, read N- to C-terminus: Probable biotin-dependent acyl-coenzyme A carboxylase beta2 subunit (529 aa).

In terms of domain architecture, CoA carboxyltransferase N-terminal spans 20-271 (MSGKLDEINA…IKQGPAPAPV (252 aa)). In terms of domain architecture, CoA carboxyltransferase C-terminal spans 270–520 (PVTEPLFDAE…SAIANGPIKG (251 aa)).

This sequence belongs to the AccD/PCCB family. As to quaternary structure, the biotin-dependent acyl-CoA carboxylase complex is composed of an AccA protein, which contains the biotin carboxylase (BC) and biotin carboxyl carrier protein (BCCP) domains, and an AccD protein, which contains the carboxyl transferase (CT) domain.

Component of a biotin-dependent acyl-CoA carboxylase complex. This subunit transfers the CO2 from carboxybiotin to the CoA ester substrate. This Mycobacterium tuberculosis (strain ATCC 25618 / H37Rv) protein is Probable biotin-dependent acyl-coenzyme A carboxylase beta2 subunit (accD2).